A 700-amino-acid polypeptide reads, in one-letter code: Methionine--tRNA ligase (700 aa).

Residues 14–24 (PYANGPVHLGH) carry the 'HIGH' region motif. Residues cysteine 146, cysteine 149, cysteine 159, and cysteine 162 each contribute to the Zn(2+) site. A 'KMSKS' region motif is present at residues 344–348 (KFSKS). ATP is bound at residue lysine 347. In terms of domain architecture, tRNA-binding spans 599–700 (DFLKVDLRVA…GEEINGRQIQ (102 aa)).

It belongs to the class-I aminoacyl-tRNA synthetase family. MetG type 1 subfamily. Homodimer. It depends on Zn(2+) as a cofactor.

The protein localises to the cytoplasm. The catalysed reaction is tRNA(Met) + L-methionine + ATP = L-methionyl-tRNA(Met) + AMP + diphosphate. Its function is as follows. Is required not only for elongation of protein synthesis but also for the initiation of all mRNA translation through initiator tRNA(fMet) aminoacylation. This is Methionine--tRNA ligase from Pelodictyon phaeoclathratiforme (strain DSM 5477 / BU-1).